A 588-amino-acid polypeptide reads, in one-letter code: Aspartate--tRNA ligase (588 aa).

Glu174 provides a ligand contact to L-aspartate. The interval 198–201 is aspartate; sequence QLFK. Arg220 provides a ligand contact to L-aspartate. ATP-binding positions include 220-222 and Gln229; that span reads RDE. L-aspartate is bound at residue His448. Glu482 contributes to the ATP binding site. Arg489 lines the L-aspartate pocket. Position 534–537 (534–537) interacts with ATP; sequence GIDR.

Belongs to the class-II aminoacyl-tRNA synthetase family. Type 1 subfamily. Homodimer.

The protein localises to the cytoplasm. The catalysed reaction is tRNA(Asp) + L-aspartate + ATP = L-aspartyl-tRNA(Asp) + AMP + diphosphate. In terms of biological role, catalyzes the attachment of L-aspartate to tRNA(Asp) in a two-step reaction: L-aspartate is first activated by ATP to form Asp-AMP and then transferred to the acceptor end of tRNA(Asp). This chain is Aspartate--tRNA ligase, found in Xanthomonas oryzae pv. oryzae (strain MAFF 311018).